The sequence spans 465 residues: Ribulose bisphosphate carboxylase large chain (465 aa).

The residue at position 4 (Lys4) is an N6,N6,N6-trimethyllysine. Positions 113 and 163 each coordinate substrate. Lys165 (proton acceptor) is an active-site residue. Lys167 provides a ligand contact to substrate. Mg(2+)-binding residues include Lys191, Asp193, and Glu194. Lys191 bears the N6-carboxylysine mark. The active-site Proton acceptor is the His284. 3 residues coordinate substrate: Arg285, His317, and Ser369.

It belongs to the RuBisCO large chain family. Type I subfamily. As to quaternary structure, heterohexadecamer of 8 large chains and 8 small chains; disulfide-linked. The disulfide link is formed within the large subunit homodimers. It depends on Mg(2+) as a cofactor. The disulfide bond which can form in the large chain dimeric partners within the hexadecamer appears to be associated with oxidative stress and protein turnover.

Its subcellular location is the plastid. It localises to the chloroplast. It carries out the reaction 2 (2R)-3-phosphoglycerate + 2 H(+) = D-ribulose 1,5-bisphosphate + CO2 + H2O. The catalysed reaction is D-ribulose 1,5-bisphosphate + O2 = 2-phosphoglycolate + (2R)-3-phosphoglycerate + 2 H(+). RuBisCO catalyzes two reactions: the carboxylation of D-ribulose 1,5-bisphosphate, the primary event in carbon dioxide fixation, as well as the oxidative fragmentation of the pentose substrate in the photorespiration process. Both reactions occur simultaneously and in competition at the same active site. This chain is Ribulose bisphosphate carboxylase large chain, found in Passiflora quadrangularis (Grenadine).